The primary structure comprises 301 residues: Thioredoxin-related transmembrane protein 2-A (301 aa).

Positions Met-1–Lys-19 are cleaved as a signal peptide. Over Trp-20–Arg-111 the chain is Extracellular. A helical transmembrane segment spans residues Phe-112–Tyr-132. Residues Val-122–Lys-269 enclose the Thioredoxin domain. The Cytoplasmic portion of the chain corresponds to Met-133–Lys-301. Residues Ser-268–Lys-301 are disordered. Acidic residues predominate over residues Leu-280–Ser-295. Positions Lys-298–Lys-301 match the Di-lysine motif motif.

In terms of assembly, monomer. Homodimer; disulfide-linked. Occurs in both reduced and oxidized monomeric form. Oxidative conditions increase homodimerization.

It is found in the endoplasmic reticulum membrane. Its subcellular location is the mitochondrion membrane. Functionally, endoplasmic reticulum and mitochondria-associated protein that probably functions as a regulator of cellular redox state and thereby regulates protein post-translational modification, protein folding and mitochondrial activity. The chain is Thioredoxin-related transmembrane protein 2-A from Danio rerio (Zebrafish).